A 503-amino-acid polypeptide reads, in one-letter code: NAD(P)H-quinone oxidoreductase chain 4, chloroplastic (503 aa).

Helical transmembrane passes span 3 to 23 (FFPW…IVFF), 37 to 57 (LCIC…HFQV), 84 to 104 (GLSV…TLAA), 113 to 130 (LFHF…GLFA), 134 to 154 (LFLF…LLSM), 167 to 187 (FILY…GLTL), 208 to 228 (ALEI…SPIL), 242 to 262 (HYST…YGLI), 274 to 294 (SLFS…AALT), 305 to 325 (IAYS…SMTD), 330 to 350 (GALL…FLAG), 385 to 405 (SLAL…FGII), 416 to 436 (ILIS…SLSM), and 462 to 482 (LFLS…PDFV).

The protein belongs to the complex I subunit 4 family.

It is found in the plastid. The protein resides in the chloroplast thylakoid membrane. The catalysed reaction is a plastoquinone + NADH + (n+1) H(+)(in) = a plastoquinol + NAD(+) + n H(+)(out). It catalyses the reaction a plastoquinone + NADPH + (n+1) H(+)(in) = a plastoquinol + NADP(+) + n H(+)(out). This is NAD(P)H-quinone oxidoreductase chain 4, chloroplastic from Ipomoea purpurea (Common morning glory).